Here is a 281-residue protein sequence, read N- to C-terminus: NADPH-dependent 7-cyano-7-deazaguanine reductase (281 aa).

Position 88 to 90 (88 to 90) interacts with substrate; sequence IES. Residue 90–91 coordinates NADPH; sequence SK. The active-site Thioimide intermediate is cysteine 189. Catalysis depends on aspartate 196, which acts as the Proton donor. Substrate is bound at residue 228–229; it reads HE. 257–258 serves as a coordination point for NADPH; the sequence is RG.

This sequence belongs to the GTP cyclohydrolase I family. QueF type 2 subfamily. Homodimer.

The protein resides in the cytoplasm. The enzyme catalyses 7-aminomethyl-7-carbaguanine + 2 NADP(+) = 7-cyano-7-deazaguanine + 2 NADPH + 3 H(+). It participates in tRNA modification; tRNA-queuosine biosynthesis. Its function is as follows. Catalyzes the NADPH-dependent reduction of 7-cyano-7-deazaguanine (preQ0) to 7-aminomethyl-7-deazaguanine (preQ1). This is NADPH-dependent 7-cyano-7-deazaguanine reductase from Sodalis glossinidius (strain morsitans).